We begin with the raw amino-acid sequence, 103 residues long: Glutaredoxin-C1 (103 aa).

In terms of domain architecture, Glutaredoxin spans 1 to 102; that stretch reads MDRVNRLAAQ…PLLRNAGALW (102 aa). Cys21 and Cys24 are oxidised to a cystine.

This sequence belongs to the glutaredoxin family. CC-type subfamily.

The protein resides in the cytoplasm. Functionally, has a glutathione-disulfide oxidoreductase activity in the presence of NADPH and glutathione reductase. Reduces low molecular weight disulfides and proteins. The sequence is that of Glutaredoxin-C1 (GRXC1) from Oryza sativa subsp. japonica (Rice).